The sequence spans 412 residues: Heme chaperone HemW (412 aa).

The region spanning 4–241 is the Radical SAM core domain; sequence GTYLMPTAAY…RHGQEVLTQA (238 aa). Position 13 (tyrosine 13) interacts with S-adenosyl-L-methionine. Residues cysteine 19, cysteine 23, and cysteine 26 each coordinate [2Fe-2S] cluster. Residues glycine 72, 73–74, glutamate 105, glutamine 132, arginine 144, and aspartate 169 contribute to the S-adenosyl-L-methionine site; that span reads GT.

Belongs to the anaerobic coproporphyrinogen-III oxidase family. HemW subfamily. [4Fe-4S] cluster is required as a cofactor.

The protein localises to the cytoplasm. Its function is as follows. Probably acts as a heme chaperone, transferring heme to an unknown acceptor. Binds one molecule of heme per monomer, possibly covalently. Binds 1 [2Fe-2S] cluster. Although this protein has sequence motifs typically found in proteins binding the [4Fe-4S]-AdoMet radical-SAM cluster and S-adenosylmethionine, spectroscopic evidence suggests that a [2Fe-2S] cluster is present; S-adenosylmethionine was not detected. Has no detectable coproporphyrinogen-III oxidase activity. This Synechocystis sp. (strain ATCC 27184 / PCC 6803 / Kazusa) protein is Heme chaperone HemW.